The chain runs to 258 residues: Phycoerythrobilin:ferredoxin oxidoreductase (258 aa).

It belongs to the HY2 family.

The enzyme catalyses (3Z)-phycoerythrobilin + oxidized 2[4Fe-4S]-[ferredoxin] = 15,16-dihydrobiliverdin + reduced 2[4Fe-4S]-[ferredoxin] + 2 H(+). Its function is as follows. Catalyzes the two-electron reduction of the C2 and C3(1) diene system of 15,16-dihydrobiliverdin. The sequence is that of Phycoerythrobilin:ferredoxin oxidoreductase from Prochlorococcus marinus (strain NATL1A).